A 432-amino-acid polypeptide reads, in one-letter code: Probable M18 family aminopeptidase 2 (432 aa).

Zn(2+) is bound by residues His86, His157, and His408.

The protein belongs to the peptidase M18 family. Requires Zn(2+) as cofactor.

The chain is Probable M18 family aminopeptidase 2 from Streptomyces avermitilis (strain ATCC 31267 / DSM 46492 / JCM 5070 / NBRC 14893 / NCIMB 12804 / NRRL 8165 / MA-4680).